The following is a 270-amino-acid chain: 4-hydroxy-tetrahydrodipicolinate reductase (270 aa).

Residues 11–16 and glutamate 37 contribute to the NAD(+) site; that span reads GAGGRM. Arginine 38 lines the NADP(+) pocket. NAD(+) is bound by residues 101–103 and 125–128; these read GTT and APNM. The Proton donor/acceptor role is filled by histidine 158. Residue histidine 159 participates in (S)-2,3,4,5-tetrahydrodipicolinate binding. Lysine 162 acts as the Proton donor in catalysis. (S)-2,3,4,5-tetrahydrodipicolinate is bound at residue 168 to 169; the sequence is GT.

It belongs to the DapB family.

It localises to the cytoplasm. The enzyme catalyses (S)-2,3,4,5-tetrahydrodipicolinate + NAD(+) + H2O = (2S,4S)-4-hydroxy-2,3,4,5-tetrahydrodipicolinate + NADH + H(+). It carries out the reaction (S)-2,3,4,5-tetrahydrodipicolinate + NADP(+) + H2O = (2S,4S)-4-hydroxy-2,3,4,5-tetrahydrodipicolinate + NADPH + H(+). The protein operates within amino-acid biosynthesis; L-lysine biosynthesis via DAP pathway; (S)-tetrahydrodipicolinate from L-aspartate: step 4/4. In terms of biological role, catalyzes the conversion of 4-hydroxy-tetrahydrodipicolinate (HTPA) to tetrahydrodipicolinate. In Shewanella sp. (strain W3-18-1), this protein is 4-hydroxy-tetrahydrodipicolinate reductase.